Consider the following 230-residue polypeptide: Ribonuclease 3 (230 aa).

An RNase III domain is found at 10–133 (DPRLQSRIGY…IIGAIYVDSN (124 aa)). Position 46 (Glu46) interacts with Mg(2+). Asp50 is an active-site residue. Mg(2+) contacts are provided by Asp119 and Glu122. The active site involves Glu122. Residues 161–230 (DPKSRLQEYL…AAEILKLLEQ (70 aa)) form the DRBM domain.

This sequence belongs to the ribonuclease III family. As to quaternary structure, homodimer. Mg(2+) serves as cofactor.

The protein localises to the cytoplasm. The enzyme catalyses Endonucleolytic cleavage to 5'-phosphomonoester.. Digests double-stranded RNA. Involved in the processing of primary rRNA transcript to yield the immediate precursors to the large and small rRNAs (23S and 16S). Processes some mRNAs, and tRNAs when they are encoded in the rRNA operon. Processes pre-crRNA and tracrRNA of type II CRISPR loci if present in the organism. This chain is Ribonuclease 3, found in Acinetobacter baylyi (strain ATCC 33305 / BD413 / ADP1).